Consider the following 267-residue polypeptide: Hydroxyethylthiazole kinase (267 aa).

Methionine 44 lines the substrate pocket. Positions 120 and 166 each coordinate ATP. Residue glycine 193 coordinates substrate.

The protein belongs to the Thz kinase family. Mg(2+) is required as a cofactor.

It catalyses the reaction 5-(2-hydroxyethyl)-4-methylthiazole + ATP = 4-methyl-5-(2-phosphooxyethyl)-thiazole + ADP + H(+). It functions in the pathway cofactor biosynthesis; thiamine diphosphate biosynthesis; 4-methyl-5-(2-phosphoethyl)-thiazole from 5-(2-hydroxyethyl)-4-methylthiazole: step 1/1. Functionally, catalyzes the phosphorylation of the hydroxyl group of 4-methyl-5-beta-hydroxyethylthiazole (THZ). This Desulfitobacterium hafniense (strain DSM 10664 / DCB-2) protein is Hydroxyethylthiazole kinase.